A 272-amino-acid polypeptide reads, in one-letter code: Dermonecrotic toxin LvSicTox-alphaIC1bv (272 aa).

His-5 is a catalytic residue. Positions 25 and 27 each coordinate Mg(2+). Residue His-41 is the Nucleophile of the active site. Cystine bridges form between Cys-45-Cys-51 and Cys-47-Cys-189. Asp-84 contributes to the Mg(2+) binding site.

This sequence belongs to the arthropod phospholipase D family. Class II subfamily. Requires Mg(2+) as cofactor. As to expression, expressed by the venom gland.

It is found in the secreted. It catalyses the reaction an N-(acyl)-sphingosylphosphocholine = an N-(acyl)-sphingosyl-1,3-cyclic phosphate + choline. It carries out the reaction an N-(acyl)-sphingosylphosphoethanolamine = an N-(acyl)-sphingosyl-1,3-cyclic phosphate + ethanolamine. The catalysed reaction is a 1-acyl-sn-glycero-3-phosphocholine = a 1-acyl-sn-glycero-2,3-cyclic phosphate + choline. The enzyme catalyses a 1-acyl-sn-glycero-3-phosphoethanolamine = a 1-acyl-sn-glycero-2,3-cyclic phosphate + ethanolamine. Its function is as follows. Dermonecrotic toxins cleave the phosphodiester linkage between the phosphate and headgroup of certain phospholipids (sphingolipid and lysolipid substrates), forming an alcohol (often choline) and a cyclic phosphate. This toxin acts on sphingomyelin (SM). It may also act on ceramide phosphoethanolamine (CPE), lysophosphatidylcholine (LPC) and lysophosphatidylethanolamine (LPE), but not on lysophosphatidylserine (LPS), and lysophosphatidylglycerol (LPG). It acts by transphosphatidylation, releasing exclusively cyclic phosphate products as second products. Induces dermonecrosis, hemolysis, increased vascular permeability, edema, inflammatory response, and platelet aggregation. The chain is Dermonecrotic toxin LvSicTox-alphaIC1bv from Loxosceles variegata (Recluse spider).